The chain runs to 63 residues: Small ribosomal subunit protein eS31 (63 aa).

Cysteine 31, cysteine 34, cysteine 50, and cysteine 53 together coordinate Zn(2+). A C4-type zinc finger spans residues cysteine 31 to cysteine 53.

The protein belongs to the eukaryotic ribosomal protein eS31 family. Part of the 30S ribosomal subunit. It depends on Zn(2+) as a cofactor.

In Sulfurisphaera tokodaii (strain DSM 16993 / JCM 10545 / NBRC 100140 / 7) (Sulfolobus tokodaii), this protein is Small ribosomal subunit protein eS31.